Here is a 524-residue protein sequence, read N- to C-terminus: DEAD-box ATP-dependent RNA helicase CshA (524 aa).

The Q motif motif lies at 1–29; it reads MKFNELNLSADLLAEIEKAGFVEASPIQE. One can recognise a Helicase ATP-binding domain in the interval 32 to 202; it reads IPLALEGKDV…VQFMKAPEHV (171 aa). 45-52 contributes to the ATP binding site; that stretch reads AQTGTGKT. Residues 150–153 carry the DEAD box motif; it reads DEAD. The Helicase C-terminal domain maps to 213–373; the sequence is LVDQYYIRVK…GLKPASVEES (161 aa). The disordered stretch occupies residues 440 to 524; it reads EKPLPFKPSG…GFVIRNKGDK (85 aa). Residues 463–498 are compositionally biased toward basic and acidic residues; sequence RRGDDRRERDRRGNGRRDEFKKGSRGNDRFDKEKRY.

This sequence belongs to the DEAD box helicase family. CshA subfamily. Oligomerizes, may be a member of the RNA degradosome.

Its subcellular location is the cytoplasm. It carries out the reaction ATP + H2O = ADP + phosphate + H(+). Functionally, DEAD-box RNA helicase possibly involved in RNA degradation. Unwinds dsRNA in both 5'- and 3'-directions, has RNA-dependent ATPase activity. In Streptococcus pneumoniae serotype 4 (strain ATCC BAA-334 / TIGR4), this protein is DEAD-box ATP-dependent RNA helicase CshA.